A 340-amino-acid chain; its full sequence is Nicotinate-nucleotide--dimethylbenzimidazole phosphoribosyltransferase (340 aa).

Glu-305 serves as the catalytic Proton acceptor.

This sequence belongs to the CobT family.

The enzyme catalyses 5,6-dimethylbenzimidazole + nicotinate beta-D-ribonucleotide = alpha-ribazole 5'-phosphate + nicotinate + H(+). Its pathway is nucleoside biosynthesis; alpha-ribazole biosynthesis; alpha-ribazole from 5,6-dimethylbenzimidazole: step 1/2. Functionally, catalyzes the synthesis of alpha-ribazole-5'-phosphate from nicotinate mononucleotide (NAMN) and 5,6-dimethylbenzimidazole (DMB). This Allorhizobium ampelinum (strain ATCC BAA-846 / DSM 112012 / S4) (Agrobacterium vitis (strain S4)) protein is Nicotinate-nucleotide--dimethylbenzimidazole phosphoribosyltransferase.